The primary structure comprises 522 residues: Probable cytosolic Fe-S cluster assembly factor narfl (522 aa).

Residues cysteine 26, cysteine 73, cysteine 76, cysteine 79, cysteine 205, cysteine 281, cysteine 439, and cysteine 443 each coordinate [4Fe-4S] cluster.

The protein belongs to the NARF family.

In terms of biological role, component of the cytosolic iron-sulfur (Fe/S) protein assembly machinery. Required for maturation of extramitochondrial Fe/S proteins. The protein is Probable cytosolic Fe-S cluster assembly factor narfl (narfl) of Dictyostelium discoideum (Social amoeba).